A 173-amino-acid chain; its full sequence is Cytochrome c-type biogenesis protein CcmE (173 aa).

Topologically, residues 1-8 (MNPRRKSR) are cytoplasmic. The chain crosses the membrane as a helical; Signal-anchor for type II membrane protein span at residues 9–29 (FKLVIFVVLGIAIASGLMLYA). Over 30 to 173 (LRQNIDLFYT…RDRQEKEGAK (144 aa)) the chain is Periplasmic. 2 residues coordinate heme: H131 and Y135. The tract at residues 139 to 173 (ELGEKMQKVHKPMGIKAADLKGESERDRQEKEGAK) is disordered. Positions 156–173 (ADLKGESERDRQEKEGAK) are enriched in basic and acidic residues.

The protein belongs to the CcmE/CycJ family.

It is found in the cell inner membrane. Its function is as follows. Heme chaperone required for the biogenesis of c-type cytochromes. Transiently binds heme delivered by CcmC and transfers the heme to apo-cytochromes in a process facilitated by CcmF and CcmH. The protein is Cytochrome c-type biogenesis protein CcmE of Haemophilus influenzae (strain 86-028NP).